A 127-amino-acid chain; its full sequence is Transthyretin (127 aa).

Cys-10 bears the Sulfocysteine mark. Lys-15 contributes to the L-thyroxine binding site. Position 42 is a 4-carboxyglutamate (Glu-42). Glu-54 contributes to the L-thyroxine binding site. Residue Asn-98 is glycosylated (N-linked (GlcNAc...) asparagine). L-thyroxine is bound at residue Ser-117.

It belongs to the transthyretin family. Homotetramer. Dimer of dimers. In the homotetramer, subunits assemble around a central channel that can accommodate two ligand molecules. Interacts with RBP4. Sulfonation of the reactive cysteine Cys-10 enhances the stability of the native conformation of TTR, avoiding misassembly of the protein leading to amyloid formation. Detected in serum (at protein level).

Its subcellular location is the secreted. Thyroid hormone-binding protein. Probably transports thyroxine from the bloodstream to the brain. In Oryctolagus cuniculus (Rabbit), this protein is Transthyretin (TTR).